An 85-amino-acid polypeptide reads, in one-letter code: Beta-defensin 18 (85 aa).

An N-terminal signal peptide occupies residues 1–23 (MQSTMKMFGIILMVIFSVSCGPS). 3 disulfide bridges follow: Cys39–Cys65, Cys46–Cys60, and Cys50–Cys66.

This sequence belongs to the beta-defensin family.

The protein localises to the secreted. Its function is as follows. Has antibacterial activity. This is Beta-defensin 18 (Defb18) from Mus musculus (Mouse).